The primary structure comprises 376 residues: Transcriptional regulator STP4 (376 aa).

Disordered regions lie at residues 25–58, 89–122, and 137–210; these read QNYC…PHAS, SSNS…SNSS, and VNCI…NWKP. Low complexity-rich tracts occupy residues 32–50 and 89–103; these read SPSP…TSPP and SSNS…YSPT. Composition is skewed to polar residues over residues 146–183 and 191–200; these read PRST…LSVK and EPQNSNTIIS. Residues 241 to 263 form a C2H2-type zinc finger; the sequence is HICKYCERGFARPNDLFRHVKCH.

Its subcellular location is the nucleus. Functionally, probable transcription factor involved in response to cell wall damage. The sequence is that of Transcriptional regulator STP4 (STP4) from Candida albicans (strain SC5314 / ATCC MYA-2876) (Yeast).